The sequence spans 200 residues: 3-isopropylmalate dehydratase small subunit (200 aa).

This sequence belongs to the LeuD family. LeuD type 1 subfamily. In terms of assembly, heterodimer of LeuC and LeuD.

It carries out the reaction (2R,3S)-3-isopropylmalate = (2S)-2-isopropylmalate. It participates in amino-acid biosynthesis; L-leucine biosynthesis; L-leucine from 3-methyl-2-oxobutanoate: step 2/4. Functionally, catalyzes the isomerization between 2-isopropylmalate and 3-isopropylmalate, via the formation of 2-isopropylmaleate. The sequence is that of 3-isopropylmalate dehydratase small subunit from Pectobacterium atrosepticum (strain SCRI 1043 / ATCC BAA-672) (Erwinia carotovora subsp. atroseptica).